Consider the following 354-residue polypeptide: Uroporphyrinogen decarboxylase (354 aa).

Residues 27 to 31 (RQAGR), D77, Y154, T209, and H327 each bind substrate.

It belongs to the uroporphyrinogen decarboxylase family. In terms of assembly, homodimer.

It is found in the cytoplasm. The catalysed reaction is uroporphyrinogen III + 4 H(+) = coproporphyrinogen III + 4 CO2. The protein operates within porphyrin-containing compound metabolism; protoporphyrin-IX biosynthesis; coproporphyrinogen-III from 5-aminolevulinate: step 4/4. In terms of biological role, catalyzes the decarboxylation of four acetate groups of uroporphyrinogen-III to yield coproporphyrinogen-III. This Histophilus somni (strain 129Pt) (Haemophilus somnus) protein is Uroporphyrinogen decarboxylase.